Here is a 386-residue protein sequence, read N- to C-terminus: Succinyl-diaminopimelate desuccinylase (386 aa).

Residue histidine 77 coordinates Zn(2+). The active site involves aspartate 79. A Zn(2+)-binding site is contributed by aspartate 110. Glutamate 144 acts as the Proton acceptor in catalysis. 3 residues coordinate Zn(2+): glutamate 145, glutamate 173, and histidine 359.

This sequence belongs to the peptidase M20A family. DapE subfamily. Homodimer. Requires Zn(2+) as cofactor. It depends on Co(2+) as a cofactor.

The catalysed reaction is N-succinyl-(2S,6S)-2,6-diaminopimelate + H2O = (2S,6S)-2,6-diaminopimelate + succinate. It functions in the pathway amino-acid biosynthesis; L-lysine biosynthesis via DAP pathway; LL-2,6-diaminopimelate from (S)-tetrahydrodipicolinate (succinylase route): step 3/3. Catalyzes the hydrolysis of N-succinyl-L,L-diaminopimelic acid (SDAP), forming succinate and LL-2,6-diaminopimelate (DAP), an intermediate involved in the bacterial biosynthesis of lysine and meso-diaminopimelic acid, an essential component of bacterial cell walls. The polypeptide is Succinyl-diaminopimelate desuccinylase (Ralstonia pickettii (strain 12J)).